The following is a 514-amino-acid chain: Synaptic vesicular amine transporter (514 aa).

Topologically, residues 1–20 (MALSELALVRWLQESRRSRK) are cytoplasmic. Residues 21–41 (LILFIVFLALLLDNMLLTVVV) form a helical membrane-spanning segment. Over 42-129 (PIIPSYLYSI…EDKDLLNENV (88 aa)) the chain is Lumenal, vesicle. N-linked (GlcNAc...) asparagine glycosylation is found at Asn-84 and Asn-91. Cys-117 and Cys-324 are oxidised to a cystine. A helical transmembrane segment spans residues 130–150 (QVGLLFASKATVQLITNPFIG). At 151-159 (LLTNRIGYP) the chain is on the cytoplasmic side. The chain crosses the membrane as a helical span at residues 160–180 (IPIFAGFCIMFVSTIMFAFSS). At 181–189 (SYAFLLIAR) the chain is on the lumenal, vesicle side. Residues 190 to 210 (SLQGIGSSCSSVAGMGMLASV) form a helical membrane-spanning segment. The Cytoplasmic portion of the chain corresponds to 211-219 (YTDDEERGN). Residues 220-242 (VMGIALGGLAMGVLVGPPFGSVL) form a helical membrane-spanning segment. Serotonin is bound by residues Leu-228 and Val-232. Residues 243–248 (YEFVGK) are Lumenal, vesicle-facing. A helical transmembrane segment spans residues 249–271 (TAPFLVLAALVLLDGAIQLFVLQ). At 272 to 291 (PSRVQPESQKGTPLTTLLKD) the chain is on the cytoplasmic side. Residues 292-311 (PYILIAAGSICFANMGIAML) form a helical membrane-spanning segment. Positions 305, 308, 312, 334, and 341 each coordinate serotonin. The Lumenal, vesicle segment spans residues 312-328 (EPALPIWMMETMCSRKW). The chain crosses the membrane as a helical span at residues 329–352 (QLGVAFLPASISYLIGTNIFGILA). Residues 353–357 (HKMGR) are Cytoplasmic-facing. A helical transmembrane segment spans residues 358 to 378 (WLCALLGMIIVGVSILCIPFA). The Lumenal, vesicle portion of the chain corresponds to 379–389 (KNIYGLIAPNF). Residues 390 to 410 (GVGFAIGMVDSSMMPIMGYLV) form a helical membrane-spanning segment. Asp-399 lines the serotonin pocket. Over 411–414 (DLRH) the chain is Cytoplasmic. Residues 415–435 (VSVYGSVYAIADVAFCMGYAI) traverse the membrane as a helical segment. Tyr-433 lines the serotonin pocket. The Lumenal, vesicle segment spans residues 436–440 (GPSAG). The helical transmembrane segment at 441–462 (GAIAKAIGFPWLMTIIGIIDIL) threads the bilayer. Residues 463–514 (FAPLCFFLRSPPAKEEKMAILMDHNCPIKTKMYTQNNIQSYPIGEDEESESD) lie on the Cytoplasmic side of the membrane. A phosphoserine mark is found at Ser-511 and Ser-513.

It belongs to the major facilitator superfamily. Vesicular transporter family. Interacts with SLC6A3. Expressed in neuronal and neuroendocrine tissues. Detected in central and peripheral nervous system in particular in axonal and dendritic processes in dopaminergic cells of substantia nigra, histaminergic neuronal cell bodies of substantia nigra and tuberomammillary nucleus, in ganglion cells of sympathetic glia and in peripheral sympathetic nerve terminals in stomach and duodenum (at protein level). Highly expressed in chromaffin cells of the adrenal medulla and histamine-storing enterochromaffin-like cells of oxyntic mucosa (at protein level).

The protein localises to the cytoplasmic vesicle. Its subcellular location is the secretory vesicle. The protein resides in the synaptic vesicle membrane. It localises to the secretory vesicle membrane. It is found in the cell projection. The protein localises to the axon. Its subcellular location is the dendrite. The enzyme catalyses serotonin(in) + 2 H(+)(out) = serotonin(out) + 2 H(+)(in). The catalysed reaction is dopamine(in) + 2 H(+)(out) = dopamine(out) + 2 H(+)(in). It carries out the reaction histamine(in) + 2 H(+)(out) = histamine(out) + 2 H(+)(in). With respect to regulation, strongly inhibited by reserpine and tetrabenazine. Also inhibited to a lesser extent by ketanserin and fenfluramine. Reserpine and ketanserin inhibit by blocking the substrate-binding pocket. Tetrabenazine traps SLC18A2/VMAT2 in an occluded conformation and its inhibition is specific to SLC18A2/VMAT2 but not SLC18A1/VMAT1. Its function is as follows. Electrogenic antiporter that exchanges one cationic monoamine with two intravesicular protons across the membrane of secretory and synaptic vesicles. Uses the electrochemical proton gradient established by the V-type proton-pump ATPase to accumulate high concentrations of monoamines inside the vesicles prior to their release via exocytosis. Transports a variety of catecholamines such as dopamine, adrenaline and noradrenaline, histamine, and indolamines such as serotonin. Regulates the transvesicular monoaminergic gradient that determines the quantal size. Mediates somatodendritic dopamine release in hippocampal neurons, likely as part of a regulated secretory pathway that integrates retrograde synaptic signals. Acts as a primary transporter for striatal dopamine loading ensuring impulse-dependent release of dopamine at the synaptic cleft. Responsible for histamine and serotonin storage and subsequent corelease from mast cell granules. This is Synaptic vesicular amine transporter (SLC18A2) from Homo sapiens (Human).